A 92-amino-acid polypeptide reads, in one-letter code: Small ribosomal subunit protein bS20 (92 aa).

The interval 1 to 23 (MANTTSAKKATRKIARRTDVNKA) is disordered.

The protein belongs to the bacterial ribosomal protein bS20 family.

Functionally, binds directly to 16S ribosomal RNA. The sequence is that of Small ribosomal subunit protein bS20 from Rhizobium etli (strain CIAT 652).